Consider the following 299-residue polypeptide: HTH-type transcriptional regulator ArgP (299 aa).

Residues 4–60 (LDYKLLLALDAVMQEQNFERAAQRLHITQSAISQRIKQLEQQFAEPLLIRSQPLQAT) enclose the HTH lysR-type domain. Positions 21-40 (FERAAQRLHITQSAISQRIK) form a DNA-binding region, H-T-H motif.

Belongs to the LysR transcriptional regulatory family. As to quaternary structure, homodimer.

In terms of biological role, controls the transcription of genes involved in arginine and lysine metabolism. The protein is HTH-type transcriptional regulator ArgP of Aeromonas salmonicida.